The chain runs to 428 residues: Enolase 1 (428 aa).

The disordered stretch occupies residues Glu38–Ser58. Gln163 contacts (2R)-2-phosphoglycerate. The active-site Proton donor is the Glu205. Residues Asp242, Glu286, and Asp313 each coordinate Mg(2+). Lys338, Arg367, Ser368, and Lys389 together coordinate (2R)-2-phosphoglycerate. Lys338 acts as the Proton acceptor in catalysis.

It belongs to the enolase family. Mg(2+) serves as cofactor.

The protein localises to the cytoplasm. The protein resides in the secreted. It is found in the cell surface. It carries out the reaction (2R)-2-phosphoglycerate = phosphoenolpyruvate + H2O. It functions in the pathway carbohydrate degradation; glycolysis; pyruvate from D-glyceraldehyde 3-phosphate: step 4/5. Catalyzes the reversible conversion of 2-phosphoglycerate (2-PG) into phosphoenolpyruvate (PEP). It is essential for the degradation of carbohydrates via glycolysis. The polypeptide is Enolase 1 (Lactobacillus gasseri (strain ATCC 33323 / DSM 20243 / BCRC 14619 / CIP 102991 / JCM 1131 / KCTC 3163 / NCIMB 11718 / NCTC 13722 / AM63)).